Here is a 312-residue protein sequence, read N- to C-terminus: Beta-ketoacyl-[acyl-carrier-protein] synthase III (312 aa).

Catalysis depends on residues cysteine 112 and histidine 237. The ACP-binding stretch occupies residues 238 to 242 (QANIR). The active site involves asparagine 267.

The protein belongs to the thiolase-like superfamily. FabH family. As to quaternary structure, homodimer.

It localises to the cytoplasm. The catalysed reaction is malonyl-[ACP] + acetyl-CoA + H(+) = 3-oxobutanoyl-[ACP] + CO2 + CoA. It functions in the pathway lipid metabolism; fatty acid biosynthesis. Its function is as follows. Catalyzes the condensation reaction of fatty acid synthesis by the addition to an acyl acceptor of two carbons from malonyl-ACP. Catalyzes the first condensation reaction which initiates fatty acid synthesis and may therefore play a role in governing the total rate of fatty acid production. Possesses both acetoacetyl-ACP synthase and acetyl transacylase activities. Its substrate specificity determines the biosynthesis of branched-chain and/or straight-chain of fatty acids. The chain is Beta-ketoacyl-[acyl-carrier-protein] synthase III from Oceanobacillus iheyensis (strain DSM 14371 / CIP 107618 / JCM 11309 / KCTC 3954 / HTE831).